The primary structure comprises 154 residues: Ribonuclease H (154 aa).

The region spanning Met-1–Asn-142 is the RNase H type-1 domain. The Mg(2+) site is built by Asp-10, Glu-48, Asp-70, and Asp-134.

It belongs to the RNase H family. Monomer. Mg(2+) serves as cofactor.

The protein localises to the cytoplasm. The catalysed reaction is Endonucleolytic cleavage to 5'-phosphomonoester.. Functionally, endonuclease that specifically degrades the RNA of RNA-DNA hybrids. In Yersinia pestis bv. Antiqua (strain Antiqua), this protein is Ribonuclease H.